Here is a 631-residue protein sequence, read N- to C-terminus: Glycosyltransferase-like protein LARGE (631 aa).

At Met1–Ser6 the chain is on the cytoplasmic side. The helical; Signal-anchor for type II membrane protein transmembrane segment at Ile7–Phe27 threads the bilayer. The Lumenal segment spans residues Val28 to Arg631. Asn95, Asn105, Asn167, Asn177, Asn287, Asn400, Asn485, Asn502, Asn521, Asn529, and Asn593 each carry an N-linked (GlcNAc...) asparagine glycan.

This sequence belongs to the glycosyltransferase 8 family.

It localises to the golgi apparatus membrane. Its function is as follows. Probable glycosyltransferase. The protein is Glycosyltransferase-like protein LARGE (lge-1) of Caenorhabditis elegans.